The chain runs to 416 residues: Serine/threonine-protein kinase 26 (416 aa).

Alanine 2 is subject to N-acetylalanine. Serine 4 is modified (phosphoserine). Positions 24–274 (FTKLERIGKG…AKELLKHKFI (251 aa)) constitute a Protein kinase domain. ATP-binding positions include 30 to 38 (IGKGSFGEV) and lysine 53. The active-site Proton acceptor is the aspartate 144. The residue at position 178 (threonine 178) is a Phosphothreonine; by autocatalysis. A disordered region spans residues 296–343 (AEGHSDEESDSEGSDSESSSRESNPHPEWSFTTVRKKPDPKKLQNGEE). 5 positions are modified to phosphoserine: serine 300, serine 304, serine 306, serine 309, and serine 325. 2 positions are modified to phosphothreonine: threonine 327 and threonine 328. Over residues 331 to 340 (KKPDPKKLQN) the composition is skewed to basic and acidic residues.

The protein belongs to the protein kinase superfamily. STE Ser/Thr protein kinase family. STE20 subfamily. In terms of assembly, homodimer. Interacts with PDCD10. Interacts with GOLGA2. Interacts with CTTNBP2NL. Interacts with RIPOR1 (via C-terminus); this interaction occurs in a PDCD10-dependent and Rho-independent manner. Interacts with PDCD10; this interaction is required for the association of STK26 with RIPOR1. Part of the core of STRIPAK complexes composed of PP2A catalytic and scaffolding subunits, the striatins (PP2A regulatory subunits), the striatin-associated proteins MOB4, STRIP1 and STRIP2, PDCD10 and members of the STE20 kinases, such as STK24 and STK26. The cofactor is Mg(2+).

It localises to the cytoplasm. Its subcellular location is the golgi apparatus. The enzyme catalyses L-seryl-[protein] + ATP = O-phospho-L-seryl-[protein] + ADP + H(+). The catalysed reaction is L-threonyl-[protein] + ATP = O-phospho-L-threonyl-[protein] + ADP + H(+). Its activity is regulated as follows. Interaction with Golgi matrix protein GOLGA2 leads to autophosphorylation on Thr-178, possibly as a consequence of stabilization of dimer formation. May also be activated by C-terminal cleavage. Its function is as follows. Serine/threonine-protein kinase that acts as a mediator of cell growth. Modulates apoptosis. In association with STK24 negatively regulates Golgi reorientation in polarized cell migration upon RHO activation. Phosphorylates ATG4B at 'Ser-383', thereby increasing autophagic flux. Part of the striatin-interacting phosphatase and kinase (STRIPAK) complexes. STRIPAK complexes have critical roles in protein (de)phosphorylation and are regulators of multiple signaling pathways including Hippo, MAPK, nuclear receptor and cytoskeleton remodeling. Different types of STRIPAK complexes are involved in a variety of biological processes such as cell growth, differentiation, apoptosis, metabolism and immune regulation. The sequence is that of Serine/threonine-protein kinase 26 from Mus musculus (Mouse).